Here is a 258-residue protein sequence, read N- to C-terminus: Transmembrane O-methyltransferase homolog (258 aa).

S-adenosyl-L-methionine contacts are provided by residues E104, G106–T107, S112, E130, and S160.

This sequence belongs to the class I-like SAM-binding methyltransferase superfamily. Cation-dependent O-methyltransferase family. As to quaternary structure, interacts with LHFPL5, PCDH15, TMC1, TMC2 and TMIE. The interaction of TOMT with TMC1 and TMC2 is required for the transportation of TMC1/2 into the stereocilia of hair cells. Interacts directly with TMC1. Widely expressed with high levels in outer and inner hair cells of the cochlea and vestibule.

It is found in the cytoplasm. Its subcellular location is the endoplasmic reticulum. The enzyme catalyses a catechol + S-adenosyl-L-methionine = a guaiacol + S-adenosyl-L-homocysteine + H(+). Functionally, catalyzes the O-methylation, and thereby the inactivation, of catecholamine neurotransmitters and catechol hormones. Required for auditory function. Component of the cochlear hair cell's mechanotransduction (MET) machinery. Involved in the assembly of the asymmetric tip-link MET complex. Required for transportation of TMC1 and TMC2 proteins into the mechanically sensitive stereocilia of the hair cells. The function in MET is independent of the enzymatic activity. The chain is Transmembrane O-methyltransferase homolog from Mus musculus (Mouse).